Consider the following 354-residue polypeptide: Eukaryotic translation initiation factor 3 subunit H (354 aa).

The interval 1 to 28 is disordered; the sequence is MATRQPYQKKFQSRDQREQTSSQQAPNS. Over residues 19-28 the composition is skewed to polar residues; the sequence is QTSSQQAPNS. Residues 33–174 form the MPN domain; the sequence is VTVDALVVMK…LSAFRLSNKA (142 aa).

This sequence belongs to the eIF-3 subunit H family. Component of the eukaryotic translation initiation factor 3 (eIF-3) complex.

It is found in the cytoplasm. Functionally, component of the eukaryotic translation initiation factor 3 (eIF-3) complex, which is involved in protein synthesis of a specialized repertoire of mRNAs and, together with other initiation factors, stimulates binding of mRNA and methionyl-tRNAi to the 40S ribosome. The eIF-3 complex specifically targets and initiates translation of a subset of mRNAs involved in cell proliferation. This Monosiga brevicollis (Choanoflagellate) protein is Eukaryotic translation initiation factor 3 subunit H.